Here is a 300-residue protein sequence, read N- to C-terminus: MSTGNAAIRGAEHFGTVSVAMVTPFHKDGTIDLKAGVELAGYLVDKGCDSLVLAGTTGESPTTTNEEKINLLKAVRAELGDSVKLIAGTGTNNTASTIELSRLSQDAGADSLLVVTPYYSRPSQEGLFQHFTAVADSVDLPICLYDIPSRSVVPIELDTIQRLSEHENIQAVKDAKGKLPEALQLLQNTDLAWYSGDDPLNLPFLSVGATGFISVIGHLAADRLRALRDAYDQGDLAGAQQIAASLAPLERAQGRLGGVTMVKAALKLRGKDVGAPRLPILEVDPAELDQLEQDLQDAGV.

Residue threonine 57 participates in pyruvate binding. Tyrosine 145 (proton donor/acceptor) is an active-site residue. Lysine 173 (schiff-base intermediate with substrate) is an active-site residue. Isoleucine 213 is a pyruvate binding site.

Belongs to the DapA family. Homotetramer; dimer of dimers.

It localises to the cytoplasm. It carries out the reaction L-aspartate 4-semialdehyde + pyruvate = (2S,4S)-4-hydroxy-2,3,4,5-tetrahydrodipicolinate + H2O + H(+). Its pathway is amino-acid biosynthesis; L-lysine biosynthesis via DAP pathway; (S)-tetrahydrodipicolinate from L-aspartate: step 3/4. Its function is as follows. Catalyzes the condensation of (S)-aspartate-beta-semialdehyde [(S)-ASA] and pyruvate to 4-hydroxy-tetrahydrodipicolinate (HTPA). This chain is 4-hydroxy-tetrahydrodipicolinate synthase, found in Corynebacterium urealyticum (strain ATCC 43042 / DSM 7109).